The primary structure comprises 61 residues: Large ribosomal subunit protein uL30 (61 aa).

The protein belongs to the universal ribosomal protein uL30 family. In terms of assembly, part of the 50S ribosomal subunit.

This chain is Large ribosomal subunit protein uL30, found in Frankia alni (strain DSM 45986 / CECT 9034 / ACN14a).